Here is a 431-residue protein sequence, read N- to C-terminus: RbAp48-related WD40 repeat-containing protein prw1 (431 aa).

6 WD repeats span residues 127 to 159 (SHPESVCSAKLMPQDDSCVATVGNYHNDVLVFD), 182 to 213 (KHTQPCTSVCWNFLSKGTLVSGSQDATLSCWD), 232 to 263 (SHEKQVSDVRFHYKHQDLLASVSYDQYLHVHD), 279 to 310 (AHSGPIHSVAFNPHNDFILATCSTDKTIALWD), 323 to 354 (GHEDIVTKISFSPHEEPILASTSADRRTLVWD), and 380 to 411 (GHTSCTIDMDWCPNYNWTMATAAEDNILQIWT).

Belongs to the WD repeat HIR1 family. Heterotetramer of alp13, clr6, prw1 and pst2.

The protein localises to the nucleus. Its function is as follows. Has a role in chromatin assembly and chromosome segregation. Involved in the deacetylation of histones. The protein is RbAp48-related WD40 repeat-containing protein prw1 (prw1) of Schizosaccharomyces pombe (strain 972 / ATCC 24843) (Fission yeast).